The chain runs to 440 residues: Ribosomal protein uS12 methylthiotransferase RimO (440 aa).

Residues 5–116 (PTIAISHLGC…IVNVIERAEQ (112 aa)) enclose the MTTase N-terminal domain. 6 residues coordinate [4Fe-4S] cluster: Cys-14, Cys-50, Cys-79, Cys-154, Cys-158, and Cys-161. Positions 140-370 (TTTEGVAYLR…ALQQPISWRK (231 aa)) constitute a Radical SAM core domain. Residues 372 to 438 (QQEVGKTVEV…EYDLFGQVVS (67 aa)) enclose the TRAM domain.

The protein belongs to the methylthiotransferase family. RimO subfamily. It depends on [4Fe-4S] cluster as a cofactor.

Its subcellular location is the cytoplasm. It carries out the reaction L-aspartate(89)-[ribosomal protein uS12]-hydrogen + (sulfur carrier)-SH + AH2 + 2 S-adenosyl-L-methionine = 3-methylsulfanyl-L-aspartate(89)-[ribosomal protein uS12]-hydrogen + (sulfur carrier)-H + 5'-deoxyadenosine + L-methionine + A + S-adenosyl-L-homocysteine + 2 H(+). In terms of biological role, catalyzes the methylthiolation of an aspartic acid residue of ribosomal protein uS12. The chain is Ribosomal protein uS12 methylthiotransferase RimO from Trichormus variabilis (strain ATCC 29413 / PCC 7937) (Anabaena variabilis).